Consider the following 357-residue polypeptide: Phosphate acyltransferase (357 aa).

The protein belongs to the PlsX family. In terms of assembly, homodimer. Probably interacts with PlsY.

The protein resides in the cytoplasm. It carries out the reaction a fatty acyl-[ACP] + phosphate = an acyl phosphate + holo-[ACP]. The protein operates within lipid metabolism; phospholipid metabolism. Catalyzes the reversible formation of acyl-phosphate (acyl-PO(4)) from acyl-[acyl-carrier-protein] (acyl-ACP). This enzyme utilizes acyl-ACP as fatty acyl donor, but not acyl-CoA. The chain is Phosphate acyltransferase from Herminiimonas arsenicoxydans.